A 266-amino-acid polypeptide reads, in one-letter code: Luciferase (266 aa).

The chain crosses the membrane as a helical span at residues Gly-22–Ile-41.

This sequence belongs to the fungal luciferase family.

It localises to the membrane. The catalysed reaction is 3-hydroxyhispidin + O2 = (E)-caffeoylpyruvate + hnu + CO2. It carries out the reaction 3-hydroxyhispidin + O2 = 4-[(E)-2-(3,4-dihydroxyphenyl)ethenyl]-1,7-dihydroxy-2,3,5-trioxabicyclo[2.2.2]oct-7-en-6-one. Functionally, luciferase; part of the gene cluster that mediates the fungal bioluminescence cycle. Uses the fungal luciferin 3-hydroxyhispidin as a substrate to produce an endoperoxide as a high-energy intermediate with decomposition that yields oxyluciferin (also known as caffeoylpyruvate) and light emission. The fungal bioluminescence cycle begins with the hispidin synthetase that catalyzes the formation of hispidin which is further hydroxylated by the hispidin-3-hydroxylase, yielding the fungal luciferin 3-hydroxyhispidin. The luciferase then produces an endoperoxide as a high-energy intermediate with decomposition that yields oxyluciferin and light emission. Oxyluciferin can be recycled to caffeic acid by caffeoylpyruvate hydrolase. The protein is Luciferase of Armillaria gallica (Bulbous honey fungus).